The chain runs to 258 residues: Isoprenyl transferase (258 aa).

Residue D38 is part of the active site. A Mg(2+)-binding site is contributed by D38. Substrate-binding positions include 39–42, W43, R51, H55, and 83–85; these read GNGR and STE. The Proton acceptor role is filled by N86. Residues W87, R89, R206, and 212–214 contribute to the substrate site; that span reads RIS. E225 contacts Mg(2+).

This sequence belongs to the UPP synthase family. Homodimer. Mg(2+) is required as a cofactor.

Its function is as follows. Catalyzes the condensation of isopentenyl diphosphate (IPP) with allylic pyrophosphates generating different type of terpenoids. The chain is Isoprenyl transferase from Bacillus anthracis.